A 332-amino-acid chain; its full sequence is Autoinducer 2 import system permease protein LsrD (332 aa).

A run of 10 helical transmembrane segments spans residues 7–27 (YSWEIALAALLIFEILAFGVI), 45–65 (ICIGIVALPLTMVIVSGGMDI), 70–90 (TIGLCAITLGVLFQLGMPLPL), 91–111 (AIIITLLLGAICGLINAGLII), 118–138 (LVITLGTMYLFGGSALLLSGM), 162–182 (FLGIPMPLIFFLVCCLFFWLL), 216–236 (VYAMTGCASAIAAVLLVSYFG), 240–260 (SDLGASFLMPAITAVVLGGAN), 261–281 (IYGGSGSIMGSALAALLVGFL), and 288–308 (AGVPNQISSALSGALLIVVVV).

It belongs to the binding-protein-dependent transport system permease family. AraH/RbsC subfamily. In terms of assembly, the complex is composed of two ATP-binding proteins (LsrA), two transmembrane proteins (LsrC and LsrD) and a solute-binding protein (LsrB).

The protein resides in the cell inner membrane. Functionally, part of the ABC transporter complex LsrABCD involved in autoinducer 2 (AI-2) import. Probably responsible for the translocation of the substrate across the membrane. The polypeptide is Autoinducer 2 import system permease protein LsrD (lsrD) (Salmonella paratyphi A (strain ATCC 9150 / SARB42)).